The primary structure comprises 525 residues: C6 finger transcription factor fsqA (525 aa).

Residues 12 to 53 (CDRCRGQKLRCVGAGKPIPNSSSRLLRNEIPCDRCRRAKVEC) constitute a DNA-binding region (zn(2)-C6 fungal-type). Disordered stretches follow at residues 80–142 (RSSS…LGDM), 204–260 (EWNS…EPAG), and 327–371 (RARS…ARSS). Polar residues predominate over residues 95-115 (PPNSLVTAASKPHPNSLSFNH). Residues 327-337 (RARSQWSSLPE) are compositionally biased toward polar residues.

It localises to the nucleus. Functionally, transcription factor that regulates the expression of the gene cluster that mediates the biosynthesis of the isoquinoline alkaloids fumisoquin A, fumisoquin B and fumisoquin C; as well as small amounts of fumipyrrole as a shunt metabolite. The products of the cluster lead to a brown coloration and are important for growth and conidiation. The protein is C6 finger transcription factor fsqA of Aspergillus fumigatus (strain ATCC MYA-4609 / CBS 101355 / FGSC A1100 / Af293) (Neosartorya fumigata).